A 260-amino-acid polypeptide reads, in one-letter code: Ras-related protein Rab-26 (260 aa).

The tract at residues 1 to 56 (MSRKKTPKSKGGSEPATSTLPAAAAATNGPRLAHPRTVRPGPEAPPNGPPQSIRPS) is disordered. Positions 76, 77, 78, 79, 80, 81, 82, 99, and 100 each coordinate GTP. Threonine 81 contributes to the Mg(2+) binding site. Short sequence motifs (switch) lie at residues 90–105 (GAFL…GIDF) and 123–140 (DTAG…YYRD). Residues threonine 100 and aspartate 123 each contribute to the Mg(2+) site. Glycine 126, asparagine 181, lysine 182, aspartate 184, alanine 212, and arginine 213 together coordinate GTP. S-geranylgeranyl cysteine attachment occurs at residues cysteine 257 and cysteine 258.

This sequence belongs to the small GTPase superfamily. Rab family. In terms of assembly, interacts with ADRA2B. Interacts with RIMS1. Mg(2+) is required as a cofactor. As to expression, detected in zymogenic cells in the stomach.

Its subcellular location is the cytoplasmic vesicle. It is found in the secretory vesicle membrane. The protein localises to the golgi apparatus membrane. The catalysed reaction is GTP + H2O = GDP + phosphate + H(+). With respect to regulation, regulated by guanine nucleotide exchange factors (GEFs) which promote the exchange of bound GDP for free GTP. Regulated by GTPase activating proteins (GAPs) which increase the GTP hydrolysis activity. Inhibited by GDP dissociation inhibitors (GDIs). The small GTPases Rab are key regulators of intracellular membrane trafficking, from the formation of transport vesicles to their fusion with membranes. Rabs cycle between an inactive GDP-bound form and an active GTP-bound form that is able to recruit to membranes different set of downstream effectors directly responsible for vesicle formation, movement, tethering and fusion. RAB26 mediates transport of ADRA2A and ADRA2B from the Golgi to the cell membrane. Plays a role in the maturation of zymogenic granules and in pepsinogen secretion in the stomach. Plays a role in the secretion of amylase from acinar granules in the parotid gland. This Mus musculus (Mouse) protein is Ras-related protein Rab-26.